A 562-amino-acid polypeptide reads, in one-letter code: Oligo-1,6-glucosidase (562 aa).

Asp21, Asn23, Asp25, and Asp29 together coordinate Ca(2+). Asp199 (nucleophile) is an active-site residue. Residue Glu256 is the Proton donor of the active site.

It belongs to the glycosyl hydrolase 13 family.

The protein localises to the cytoplasm. The catalysed reaction is Hydrolysis of (1-&gt;6)-alpha-D-glucosidic linkages in some oligosaccharides produced from starch and glycogen by alpha-amylase, and in isomaltose.. This Parageobacillus thermoglucosidasius (Geobacillus thermoglucosidasius) protein is Oligo-1,6-glucosidase (malL).